The primary structure comprises 309 residues: MVGFKATDVPPTATVKFLGAGTAACIADLITFPLDTAKVRLQIQGESQGPVHATASAQYRGVMGTILTMVRTEGPRSLYNGLVAGLQRQMSFASVRIGLYDSVKQFYTKGSEHASIGSRLLAGSTTGALAVAVAQPTDVVKVRFQAQARAGGGRRYQSTVNAYKTIAREEGFRGLWKGTSPNVARNAIVNCAELVTYDLIKDALLKANLMTDDLPCHFTSAFGAGFCTTVIASPVDVVKTRYMNSALGQYSSAGHCALTMLQKEGPRAFYKGFMPSFLRLGSWNVVMFVTYEQLKRALMAACTSREAPF.

At 1-16 (MVGFKATDVPPTATVK) the chain is on the mitochondrial intermembrane side. Solcar repeat units lie at residues 11-106 (PTAT…VKQF), 114-203 (ASIG…IKDA), and 212-297 (DDLP…LKRA). The segment at 16–63 (KFLGAGTAACIADLITFPLDTAKVRLQIQGESQGPVHATASAQYRGVM) is important for interaction with long-chain fatty acids. Residues 17–40 (FLGAGTAACIADLITFPLDTAKVR) form a helical membrane-spanning segment. Topologically, residues 41 to 77 (LQIQGESQGPVHATASAQYRGVMGTILTMVRTEGPRS) are mitochondrial matrix. A helical transmembrane segment spans residues 78 to 103 (LYNGLVAGLQRQMSFASVRIGLYDSV). Residues 104 to 119 (KQFYTKGSEHASIGSR) lie on the Mitochondrial intermembrane side of the membrane. The helical transmembrane segment at 120-145 (LLAGSTTGALAVAVAQPTDVVKVRFQ) threads the bilayer. The Mitochondrial matrix segment spans residues 146–173 (AQARAGGGRRYQSTVNAYKTIAREEGFR). Residues 174–199 (GLWKGTSPNVARNAIVNCAELVTYDL) form a helical membrane-spanning segment. At 200–217 (IKDALLKANLMTDDLPCH) the chain is on the mitochondrial intermembrane side. Residues 218–242 (FTSAFGAGFCTTVIASPVDVVKTRY) form a helical membrane-spanning segment. Residues 243-268 (MNSALGQYSSAGHCALTMLQKEGPRA) lie on the Mitochondrial matrix side of the membrane. A helical membrane pass occupies residues 269-294 (FYKGFMPSFLRLGSWNVVMFVTYEQL). The tract at residues 278-285 (LRLGSWNV) is important for interaction with long-chain fatty acids. The Mitochondrial intermembrane portion of the chain corresponds to 295–309 (KRALMAACTSREAPF).

This sequence belongs to the mitochondrial carrier (TC 2.A.29) family. In terms of assembly, homotetramer. Adopts an asymmetrical dimer of dimers functional form. Interacts with MICU1 (when methylated); leading to decrease the calcium sensitivity of MICU1.

The protein localises to the mitochondrion inner membrane. It catalyses the reaction L-aspartate(out) + phosphate(in) + H(+)(in) = L-aspartate(in) + phosphate(out) + H(+)(out). The catalysed reaction is oxaloacetate(out) + phosphate(in) + H(+)(in) = oxaloacetate(in) + phosphate(out) + H(+)(out). It carries out the reaction (S)-malate(out) + phosphate(in) + H(+)(in) = (S)-malate(in) + phosphate(out) + H(+)(out). The enzyme catalyses malonate(out) + phosphate(in) + H(+)(in) = malonate(in) + phosphate(out) + H(+)(out). It catalyses the reaction sulfate(out) + phosphate(in) + H(+)(in) = sulfate(in) + phosphate(out) + H(+)(out). The catalysed reaction is (S)-malate(out) = (S)-malate(in). It carries out the reaction L-aspartate(out) = L-aspartate(in). The enzyme catalyses phosphate(in) = phosphate(out). It catalyses the reaction chloride(in) = chloride(out). The catalysed reaction is H(+)(in) = H(+)(out). It carries out the reaction a long-chain fatty acid(out) = a long-chain fatty acid(in). Its function is as follows. Antiporter that exports dicarboxylate intermediates of the Krebs cycle in exchange for phosphate plus a proton across the inner membrane of mitochondria, a process driven by mitochondrial motive force with an overall impact on glycolysis, glutaminolysis and glutathione-dependent redox balance. Continuous export of oxaloacetate and related four-carbon dicarboxylates from mitochondrial matrix into the cytosol negatively regulates the oxidation of acetyl-CoA substrates via the Krebs cycle lowering the ATP/ADP ratio and reactive oxygen species (ROS) production. May mediate inducible proton entry into the mitochondrial matrix affecting ATP turnover as a protection mechanism against oxidative stress. The proton currents are most likely associated with fatty acid flipping across the inner membrane of mitochondria in a metabolic process regulated by free fatty acids and purine nucleotides. Regulates the use of glucose as a source of energy. Required for glucose-induced DRP1-dependent mitochondrial fission and neuron activation in the ventromedial nucleus of the hypothalamus (VMH). This mitochondrial adaptation mechanism modulates the VMH pool of glucose-excited neurons with an impact on systemic glucose homeostasis. Regulates ROS levels and metabolic reprogramming of macrophages during the resolution phase of inflammation. Attenuates ROS production in response to IL33 to preserve the integrity of the Krebs cycle required for persistent production of itaconate and subsequent GATA3-dependent differentiation of inflammation-resolving alternatively activated macrophages. Can unidirectionally transport anions including L-malate, L-aspartate, phosphate and chloride ions. Does not mediate adaptive thermogenesis. The protein is Dicarboxylate carrier UCP2 (UCP2) of Pongo abelii (Sumatran orangutan).